A 4377-amino-acid polypeptide reads, in one-letter code: Ankyrin-3 (4377 aa).

The tract at residues 1–44 (MAHAASQLKKNRDLEINAEEEPEKKRKHRKRSRDRKKKSDANAS) is disordered. The span at 25-38 (KRKHRKRSRDRKKK) shows a compositional bias: basic residues. S39 is subject to Phosphoserine. ANK repeat units follow at residues 73-102 (NGLNALHLASKEGHVEVVSELLQREANVDA), 106-135 (KGNTALHIASLAGQAEVVKVLVTNGANVNA), 139-168 (NGFTPLYMAAQENHLEVVKFLLDNGASQSL), 172-201 (DGFTPLAVALQQGHDQVVSLLLENDTKGKV), 203-230 (LPALHIAARKDDTKAAALLLQNDNNADV), 234-263 (SGFTPLHIAAHYGNINVATLLLNRAAAVDF), 267-296 (NDITPLHVASKRGNANMVKLLLDRGAKIDA), 300-329 (DGLTPLHCGARSGHEQVVEMLLDRAAPILS), 333-362 (NGLSPLHMATQGDHLNCVQLLLQHNVPVDD), 366-395 (DYLTALHVAAHCGHYKVAKVLLDKKANPNA), 399-428 (NGFTPLHIACKKNRIKVMELLLKHGASIQA), 432-461 (SGLTPIHVAAFMGHVNIVSQLMHHGASPNT), 465-494 (RGETALHMAARSGQAEVVRYLVQDGAQVEA), 498-527 (DDQTPLHISARLGKADIVQQLLQQGASPNA), 531-560 (SGYTPLHLSAREGHEDVAAFLLDHGASLSI), 564-593 (KGFTPLHVAAKYGKLEVANLLLQKSASPDA), 597-626 (SGLTPLHVAAHYDNQKVALLLLDQGASPHA), 630-659 (NGYTPLHIAAKKNQMDIATTLLEYGADANA), 663-692 (QGIASVHLAAQEGHVDMVSLLLGRNANVNL), 696-725 (SGLTPLHLAAQEDRVNVAEVLVNQGAHVDA), 729-758 (MGYTPLHVGCHYGNIKIVNFLLQHSAKVNA), 762-791 (NGYTPLHQAAQQGHTHIINVLLQNNASPNE), and 795-825 (NGNTALGIARRLGYISVVDTLKIVTEETMTT). Phosphoserine is present on T468. Position 623 is a phosphoserine (S623). A phosphoserine mark is found at T765 and E791. Phosphoserine occurs at positions 847, 861, 867, 913, 916, 922, 957, 959, and 1113. 2 ZU5 domains span residues 984 to 1139 (FLVS…VVSR) and 1141 to 1288 (KQES…LADC). Positions 1273–1407 (VSFTTNVSAR…SIKIRDTSQE (135 aa)) are UPA domain. Phosphoserine is present on residues S1445, S1459, and S1470. The span at 1519–1539 (SGFTSLSSSSSNTPSASPLKS) shows a compositional bias: low complexity. A disordered region spans residues 1519-1540 (SGFTSLSSSSSNTPSASPLKSI). 9 positions are modified to phosphoserine: S1622, S1625, S1632, I1651, L1658, S1984, S2111, S2123, and S2126. 15 disordered regions span residues 1968 to 1987 (VDNKGSPKSPKSDKGHSPED), 2107 to 2159 (TILE…VPIP), 2176 to 2245 (YDPS…EETH), 2299 to 2322 (AVSPDVHKSAAETSAQHAEKDNQM), 2383 to 2433 (FPCS…ISDD), 2474 to 2508 (DVSHSDTEESVTDHAGPPSSELQGSDKRSREKIAT), 2588 to 2751 (LTEV…VKKI), 2795 to 2824 (QSNEIVVNDSGSDNVKKQRTEMSSKAMPDS), 3036 to 3067 (PPLEETETSPTKSPDSLEFSPGKESPSSDVFD), 3131 to 3272 (TFYT…KKHH), 3298 to 3516 (PVIR…SVFP), 3538 to 3607 (KGLD…HEGK), 3635 to 3718 (GEHT…DPKL), 3868 to 3897 (KATSPKDTFPPNHMSNTKASKMKQVSQSEK), and 4019 to 4090 (KKMQ…CERT). A compositionally biased stretch (basic and acidic residues) spans 1977 to 1986 (PKSDKGHSPE). Residues 2115–2136 (FSQHDQDKSPLSDSGFETRSEK) are compositionally biased toward basic and acidic residues. A compositionally biased stretch (polar residues) spans 2137–2146 (TPSAPQSAES). Basic and acidic residues predominate over residues 2299 to 2308 (AVSPDVHKSA). Over residues 2390–2399 (GQQEEEELTA) the composition is skewed to acidic residues. Residues 2407-2417 (LESSRVNTPVS) are compositionally biased toward polar residues. Composition is skewed to basic and acidic residues over residues 2497–2508 (GSDKRSREKIAT) and 2588–2612 (LTEVSQFFRDKTEKLNDELQSPEKK). Residues 2622–2631 (SSQSPTSSSP) are compositionally biased toward low complexity. Over residues 2706-2716 (SGFQLKQSKLS) the composition is skewed to polar residues. Basic and acidic residues predominate over residues 2720 to 2742 (LKFEQGTHAKSKDMSQEDRKSDG). Over residues 2796–2807 (SNEIVVNDSGSD) the composition is skewed to polar residues. Composition is skewed to polar residues over residues 3154 to 3186 (EQVSFLDSSGKSPLTPETPSSEEVSYEFTSKTP) and 3214 to 3224 (KSTSLKQTTVE). 2 stretches are compositionally biased toward basic and acidic residues: residues 3227 to 3242 (AVEREMPNDVSKDSNQ) and 3335 to 3361 (KLKEVDDEQKEKPKASAEKASNQKELE). A compositionally biased stretch (polar residues) spans 3377–3402 (SPQNEIAQNGNNDQSITECSIATTAE). Residues 3409 to 3428 (ATEIDSLDGYDLQDEDDGLT) are compositionally biased toward acidic residues. Composition is skewed to basic and acidic residues over residues 3465-3481 (EVIEEEGKVGPDEDKPP) and 3549-3575 (RGDDEVFDSKSREDETKPFGLAVEDRS). A compositionally biased stretch (low complexity) spans 3576–3598 (PATTPDTTPARTPTDESTPTSEP). A compositionally biased stretch (basic and acidic residues) spans 3637–3651 (HTSEGKSGDQGEGDK). 4 stretches are compositionally biased toward polar residues: residues 3654-3669 (VTATPQPQSGDTTVET), 3676-3713 (ETPTVEPNPSIPTSGECQEGTSSSGSLEKSAAATNTSK), 3880-3897 (HMSNTKASKMKQVSQSEK), and 4033-4052 (SRNTSLSETSRGGQPSVTTK). Basic and acidic residues predominate over residues 4053–4076 (SARDKKTEAAPLKSKSEKAGSEKR). In terms of domain architecture, Death spans 4090-4174 (TDIRMAIVAD…DIVTLLEGPI (85 aa)). Phosphoserine is present on residues S4211 and S4229. Disordered regions lie at residues 4251 to 4298 (NGSH…EPAS) and 4323 to 4377 (PVSM…KSHS). Over residues 4268-4277 (PESQNDVGKQ) the composition is skewed to polar residues. S4290 and S4298 each carry phosphoserine. Residues 4337 to 4347 (GKPRLSLHEEE) are compositionally biased toward basic and acidic residues. The residue at position 4350 (S4350) is a Phosphoserine. Residues 4362-4377 (VKTKKEIRHVEKKSHS) are compositionally biased toward basic residues.

As to quaternary structure, directly interacts with DMD and betaDAG1. This interaction does not interfere with binding between DMD and betaDAG1. It is also required for DMD and betaDAG1 retention at costameres. Interacts (via N-terminal ANK repeats) with SCHIP1 isoform 5 (via C-terminus); this interaction is required for the localization at axon initial segments (AISs) and nodes of Ranvier (NRs). May be a constituent of a NFASC/NRCAM/ankyrin G complex. Interacts with RHBG. Interacts with PLEC and FLNC. Interacts with KCNA1; this inhibits channel activity. Interacts (via ANK repeats) with IQCJ-SCHIP1; required for IQCJ-SCHIP1 localization at axon initial segments (AIS) and nodes of Ranvier. Interacts with SCHIP1. Interacts with SCN5A. Interacts with PKP2 and GJA1/CX43. Expressed in brain, neurons, muscles and other tissues.

It localises to the cytoplasm. Its subcellular location is the cytoskeleton. The protein localises to the cell projection. It is found in the axon. The protein resides in the cell membrane. It localises to the sarcolemma. Its subcellular location is the postsynaptic cell membrane. The protein localises to the lysosome. It is found in the T-tubule. The protein resides in the golgi apparatus. Membrane-cytoskeleton linker. May participate in the maintenance/targeting of ion channels and cell adhesion molecules at the nodes of Ranvier and axonal initial segments. In skeletal muscle, required for costamere localization of DMD and betaDAG1. Regulates KCNA1 channel activity in function of dietary Mg(2+) levels, and thereby contributes to the regulation of renal Mg(2+) reabsorption. Required for intracellular adhesion and junctional conductance in myocytes, potentially via stabilization of GJA1/CX43 protein abundance and promotion of PKP2, GJA1/CX43, and SCN5A/Nav1.5 localization to cell-cell junctions. In terms of biological role, may be part of a Golgi-specific membrane cytoskeleton in association with beta-spectrin. This is Ankyrin-3 from Homo sapiens (Human).